The following is a 345-amino-acid chain: 4-hydroxyproline 2-epimerase (345 aa).

A substrate-binding site is contributed by glutamine 85. Serine 93 (proton acceptor) is an active-site residue. Substrate-binding positions include glycine 94–serine 95 and aspartate 251. Cysteine 255 (proton donor) is an active-site residue. Residue glycine 256 to threonine 257 participates in substrate binding.

This sequence belongs to the proline racemase family.

It catalyses the reaction trans-4-hydroxy-L-proline = cis-4-hydroxy-D-proline. In terms of biological role, catalyzes the epimerization of trans-4-hydroxy-L-proline (t4LHyp) to cis-4-hydroxy-D-proline (c4DHyp). May be involved in a degradation pathway of t4LHyp, which would allow A.tumefaciens to grow on t4LHyp as a sole carbon source. Can also catalyze the epimerization of trans-3-hydroxy-L-proline (t3LHyp) to cis-3-hydroxy-D-proline (c3DHyp) in vitro. Displays no proline racemase activity. The chain is 4-hydroxyproline 2-epimerase from Agrobacterium fabrum (strain C58 / ATCC 33970) (Agrobacterium tumefaciens (strain C58)).